Reading from the N-terminus, the 2164-residue chain is Hemagglutinin A (2164 aa).

An N-terminal signal peptide occupies residues 1–25 (MRKLNSLFSLAVLLSLLCWGQTAAA). Peptidase C25-like regions lie at residues 26–539 (QGGP…TPPP), 540–991 (GGSS…TPPP), and 992–1443 (GGTS…TPPP). Disordered stretches follow at residues 493 to 512 (WDAPNGTPNPNPGTTTLSES) and 520 to 541 (SWKTIDADGDGNNWTTTPPPGG). A compositionally biased stretch (low complexity) spans 496–508 (PNGTPNPNPGTTT).

This sequence belongs to the peptidase C25 family.

In terms of biological role, agglutinates erythrocytes. In Porphyromonas gingivalis (strain ATCC BAA-308 / W83), this protein is Hemagglutinin A (hagA).